Reading from the N-terminus, the 39-residue chain is TVINVKCTSPKQCLKPCKDLYGPHAGAKCMNGKCKCYNN.

3 disulfides stabilise this stretch: Cys-7–Cys-29, Cys-13–Cys-34, and Cys-17–Cys-36.

Belongs to the short scorpion toxin superfamily. Potassium channel inhibitor family. Alpha-KTx 02 subfamily. As to expression, expressed by the venom gland.

Its subcellular location is the secreted. Functionally, blocks Kv1.3/KCNA3 voltage-gated potassium channels of human T-lymphocytes (Kd=0.71 nM). The polypeptide is Potassium channel toxin alpha-KTx 2.8 (Centruroides elegans (Bark scorpion)).